Consider the following 160-residue polypeptide: Probable chemoreceptor glutamine deamidase CheD 2 (160 aa).

Belongs to the CheD family.

The enzyme catalyses L-glutaminyl-[protein] + H2O = L-glutamyl-[protein] + NH4(+). Its function is as follows. Probably deamidates glutamine residues to glutamate on methyl-accepting chemotaxis receptors (MCPs), playing an important role in chemotaxis. In Geobacter sulfurreducens (strain ATCC 51573 / DSM 12127 / PCA), this protein is Probable chemoreceptor glutamine deamidase CheD 2.